Consider the following 361-residue polypeptide: Phosphoserine aminotransferase (361 aa).

An L-glutamate-binding site is contributed by Arg43. Residues 77–78 (AS), Trp103, Thr152, Asp172, and Gln195 contribute to the pyridoxal 5'-phosphate site. An N6-(pyridoxal phosphate)lysine modification is found at Lys196. 237–238 (NT) serves as a coordination point for pyridoxal 5'-phosphate.

The protein belongs to the class-V pyridoxal-phosphate-dependent aminotransferase family. SerC subfamily. In terms of assembly, homodimer. Requires pyridoxal 5'-phosphate as cofactor.

The protein localises to the cytoplasm. It catalyses the reaction O-phospho-L-serine + 2-oxoglutarate = 3-phosphooxypyruvate + L-glutamate. The enzyme catalyses 4-(phosphooxy)-L-threonine + 2-oxoglutarate = (R)-3-hydroxy-2-oxo-4-phosphooxybutanoate + L-glutamate. It participates in amino-acid biosynthesis; L-serine biosynthesis; L-serine from 3-phospho-D-glycerate: step 2/3. It functions in the pathway cofactor biosynthesis; pyridoxine 5'-phosphate biosynthesis; pyridoxine 5'-phosphate from D-erythrose 4-phosphate: step 3/5. Functionally, catalyzes the reversible conversion of 3-phosphohydroxypyruvate to phosphoserine and of 3-hydroxy-2-oxo-4-phosphonooxybutanoate to phosphohydroxythreonine. This chain is Phosphoserine aminotransferase, found in Desulfatibacillum aliphaticivorans.